The following is a 535-amino-acid chain: Calcium-dependent protein kinase 5 (535 aa).

The interval 1–46 (MGNACRGSFGGKTFQGYPQPQDHSESNSNPKHNSDSPKPKKEQQPL) is disordered. Gly-2 carries N-myristoyl glycine lipidation. The S-palmitoyl cysteine moiety is linked to residue Cys-5. Over residues 32–43 (HNSDSPKPKKEQ) the composition is skewed to basic and acidic residues. In terms of domain architecture, Protein kinase spans 72 to 330 (YTLGRKLGQG…AHEVLCHPWI (259 aa)). ATP is bound by residues 78 to 86 (LGQGQFGTT) and Lys-101. The active-site Proton acceptor is the Asp-196. The interval 336–366 (APDRALDPAVLSRLKHFSAMNKLKKMALRVI) is autoinhibitory domain. EF-hand domains are found at residues 373-408 (EEIA…YGST), 409-444 (LKDI…LNKL), 445-480 (DREE…HNIT), and 484-514 (FEDI…GNPC). 19 residues coordinate Ca(2+): Asp-386, Asp-388, Ser-390, Glu-397, Asp-422, Asp-424, Ser-426, Thr-428, Glu-433, Asp-458, Asp-460, Ser-462, Tyr-464, Glu-469, Asp-492, Asp-494, Asp-496, Arg-498, and Glu-503.

Belongs to the protein kinase superfamily. Ser/Thr protein kinase family. CDPK subfamily.

It is found in the cell membrane. It catalyses the reaction L-seryl-[protein] + ATP = O-phospho-L-seryl-[protein] + ADP + H(+). The catalysed reaction is L-threonyl-[protein] + ATP = O-phospho-L-threonyl-[protein] + ADP + H(+). With respect to regulation, activated by calcium. Autophosphorylation may play an important role in the regulation of the kinase activity. Its function is as follows. Regulates the production of reactive oxygen species (ROS) by NADPH oxidase. This chain is Calcium-dependent protein kinase 5 (CPK5), found in Solanum tuberosum (Potato).